A 119-amino-acid polypeptide reads, in one-letter code: Ribonuclease P protein component (119 aa).

This sequence belongs to the RnpA family. In terms of assembly, consists of a catalytic RNA component (M1 or rnpB) and a protein subunit.

The enzyme catalyses Endonucleolytic cleavage of RNA, removing 5'-extranucleotides from tRNA precursor.. In terms of biological role, RNaseP catalyzes the removal of the 5'-leader sequence from pre-tRNA to produce the mature 5'-terminus. It can also cleave other RNA substrates such as 4.5S RNA. The protein component plays an auxiliary but essential role in vivo by binding to the 5'-leader sequence and broadening the substrate specificity of the ribozyme. This is Ribonuclease P protein component from Coprothermobacter proteolyticus (strain ATCC 35245 / DSM 5265 / OCM 4 / BT).